The sequence spans 872 residues: Alanine--tRNA ligase (872 aa).

His-566, His-570, Cys-668, and His-672 together coordinate Zn(2+).

The protein belongs to the class-II aminoacyl-tRNA synthetase family. Requires Zn(2+) as cofactor.

The protein localises to the cytoplasm. The catalysed reaction is tRNA(Ala) + L-alanine + ATP = L-alanyl-tRNA(Ala) + AMP + diphosphate. In terms of biological role, catalyzes the attachment of alanine to tRNA(Ala) in a two-step reaction: alanine is first activated by ATP to form Ala-AMP and then transferred to the acceptor end of tRNA(Ala). Also edits incorrectly charged Ser-tRNA(Ala) and Gly-tRNA(Ala) via its editing domain. The sequence is that of Alanine--tRNA ligase from Lactococcus lactis subsp. cremoris (strain MG1363).